We begin with the raw amino-acid sequence, 572 residues long: Proline--tRNA ligase (572 aa).

The protein belongs to the class-II aminoacyl-tRNA synthetase family. ProS type 1 subfamily. As to quaternary structure, homodimer.

Its subcellular location is the cytoplasm. It catalyses the reaction tRNA(Pro) + L-proline + ATP = L-prolyl-tRNA(Pro) + AMP + diphosphate. Its function is as follows. Catalyzes the attachment of proline to tRNA(Pro) in a two-step reaction: proline is first activated by ATP to form Pro-AMP and then transferred to the acceptor end of tRNA(Pro). As ProRS can inadvertently accommodate and process non-cognate amino acids such as alanine and cysteine, to avoid such errors it has two additional distinct editing activities against alanine. One activity is designated as 'pretransfer' editing and involves the tRNA(Pro)-independent hydrolysis of activated Ala-AMP. The other activity is designated 'posttransfer' editing and involves deacylation of mischarged Ala-tRNA(Pro). The misacylated Cys-tRNA(Pro) is not edited by ProRS. The chain is Proline--tRNA ligase from Shigella dysenteriae serotype 1 (strain Sd197).